Here is a 268-residue protein sequence, read N- to C-terminus: Ribosomal RNA small subunit methyltransferase A (268 aa).

Residues asparagine 23, isoleucine 25, glycine 50, glutamate 72, aspartate 97, and asparagine 116 each coordinate S-adenosyl-L-methionine.

This sequence belongs to the class I-like SAM-binding methyltransferase superfamily. rRNA adenine N(6)-methyltransferase family. RsmA subfamily.

The protein localises to the cytoplasm. The catalysed reaction is adenosine(1518)/adenosine(1519) in 16S rRNA + 4 S-adenosyl-L-methionine = N(6)-dimethyladenosine(1518)/N(6)-dimethyladenosine(1519) in 16S rRNA + 4 S-adenosyl-L-homocysteine + 4 H(+). Its function is as follows. Specifically dimethylates two adjacent adenosines (A1518 and A1519) in the loop of a conserved hairpin near the 3'-end of 16S rRNA in the 30S particle. May play a critical role in biogenesis of 30S subunits. The chain is Ribosomal RNA small subunit methyltransferase A from Rickettsia bellii (strain RML369-C).